A 280-amino-acid polypeptide reads, in one-letter code: 2-dehydro-3-deoxyphosphooctonate aldolase (280 aa).

It belongs to the KdsA family.

It localises to the cytoplasm. It catalyses the reaction D-arabinose 5-phosphate + phosphoenolpyruvate + H2O = 3-deoxy-alpha-D-manno-2-octulosonate-8-phosphate + phosphate. It participates in carbohydrate biosynthesis; 3-deoxy-D-manno-octulosonate biosynthesis; 3-deoxy-D-manno-octulosonate from D-ribulose 5-phosphate: step 2/3. The protein operates within bacterial outer membrane biogenesis; lipopolysaccharide biosynthesis. The chain is 2-dehydro-3-deoxyphosphooctonate aldolase from Desulfotalea psychrophila (strain LSv54 / DSM 12343).